The following is a 1018-amino-acid chain: MKNNLRYGIRKHKLGAASVFLGTMIVVGMGQDKEAAASEQKTTTVEENGNSATDNKTSETQTTATNVNHIEETQSYNATVTEQPSNATQVTTEEAPKAVQAPQTAQPANIETVKEEVVKEEAKPQVKETTQSQDNSGDQRQVDLTPKKATQNQVAETQVEVAQPRTASESKPRVTRSADVAEAKEASNAKVETGTDVTSKVTVEIGSIEGHNNTNKVEPHAGQRAVLKYKLKFENGLHQGDYFDFTLSNNVNTHGVSTARKVPEIKNGSVVMATGEVLEGGKIRYTFTNDIEDKVDVTAELEINLFIDPKTVQTNGNQTITSTLNEEQTSKELDVKYKDGIGNYYANLNGSIETFNKANNRFSHVAFIKPNNGKTTSVTVTGTLMKGSNQNGNQPKVRIFEYLGNNEDIAKSVYANTTDTSKFKEVTSNMSGNLNLQNNGSYSLNIENLDKTYVVHYDGEYLNGTDEVDFRTQMVGHPEQLYKYYYDRGYTLTWDNGLVLYSNKANGNGKNGPIIQNNKFEYKEDTIKETLTGQYDKNLVTTVEEEYDSSTLDIDYHTAIDGGGGYVDGYIETIEETDSSAIDIDYHTAVDSEAGHVGGYTESSEESNPIDFEESTHENSKHHADVVEYEEDTNPGGGQVTTESNLVEFDEESTKGIVTGAVSDHTTVEDTKEYTTESNLIELVDELPEEHGQAQGPVEEITENNHHISHSGLGTENGHGNYDVIEEIEENSHVDIKSELGYEGGQNSGNQSFEEDTEEDKPKYEQGGNIVDIDFDSVPQIHGQNKGNQSFEEDTEKDKPKYEHGGNIIDIDFDSVPHIHGFNKHTEIIEEDTNKDKPSYQFGGHNSVDFEEDTLPKVSGQNEGQQTIEEDTTPPIVPPTPPTPEVPSEPETPTPPTPEVPSEPETPTPPTPEVPSEPETPTPPTPEVPAEPGKPVPPAKEEPKKPSKPVEQGKVVTPVIEINEKVKAVAPTKKPQSKKSELPETGGEESTNKGMLFGGLFSILGLALLRRNKKNHKA.

The signal sequence occupies residues Met-1 to Ala-36. The YSIRK-G/S signaling motif signature appears at Tyr-7–Ser-18. The interval Ala-37–Asn-511 is ligand-binding A region. Disordered regions lie at residues Ser-38 to Gln-61 and Ala-78 to Thr-195. 2 stretches are compositionally biased toward polar residues: residues Glu-39 to Gln-61 and Ala-78 to Thr-92. The segment covering Thr-112–Val-126 has biased composition (basic and acidic residues). The span at Thr-129 to Gln-139 shows a compositional bias: polar residues. Residues Gly-194–Asn-511 are fibrinogen/elastin/tropoelastin-binding. Positions Gly-512 to Thr-872 are fibronectin-binding. One copy of the B-1 repeat lies at Glu-545–Ile-574. The 2 X approximate tandem repeats stretch occupies residues Glu-545–Ser-604. The stretch at Glu-575 to Ser-604 is one B-2 repeat. Disordered regions lie at residues Gly-595–His-622, Leu-740–Phe-813, and Glu-827–Phe-997. One copy of the D-1 repeat lies at Gly-745–His-782. The tract at residues Gly-745–Pro-878 is 4 X approximate tandem repeats. Residues Gly-783–His-820 form a D-2 repeat. One copy of the D-3 repeat lies at Gly-821–Ser-859. Residues Glu-827 to Pro-838 are compositionally biased toward basic and acidic residues. One copy of the D-4; truncated repeat lies at Gly-860–Pro-878. Positions Pro-875–Pro-938 are enriched in pro residues. WR repeat units lie at residues Pro-879–Thr-892, Pro-893–Thr-906, Pro-907–Thr-920, Pro-921–Lys-934, and Pro-935–Lys-948. Residues Pro-879–Lys-948 are 5 X tandem repeats, Pro-rich (WR). Residues Leu-982–Gly-986 carry the LPXTG sorting signal motif. Thr-985 bears the Pentaglycyl murein peptidoglycan amidated threonine mark. Residues Gly-986–Ala-1018 constitute a propeptide, removed by sortase.

Its subcellular location is the secreted. It localises to the cell wall. Promotes bacterial attachment to multiple substrates, such as fibronectin (Fn), fibrinogen (Fg), elastin peptides and tropoelastin. This confers to S.aureus the ability to invade endothelial cells. Promotes adherence to and aggregation of activated platelets. The chain is Fibronectin-binding protein A from Staphylococcus aureus (strain USA300).